Consider the following 1030-residue polypeptide: FACT complex subunit spt-16 (1030 aa).

Residues 424–445 adopt a coiled-coil conformation; sequence RLKSNVIKFKEEQENREAEKDN. Basic and acidic residues-rich tracts occupy residues 435 to 449 and 464 to 477; these read EQENREAEKDNDQKK and TRNKTTNEELRKER. 2 disordered regions span residues 435 to 477 and 491 to 514; these read EQEN…RKER and ARLSKQGGGTDEKKSKKSNVSYKT. Residues 623–645 adopt a coiled-coil conformation; sequence RLIKEMQKRFKTEEAEEREKEGA. The disordered stretch occupies residues 927–1030; it reads VESDNEEAMD…KSGPSHKRRK (104 aa). 2 stretches are compositionally biased toward acidic residues: residues 929 to 951 and 958 to 983; these read SDNEEAMDDSDDSDAYDPEEEDA and ESDEDESEGEETESDDDDEGSLDSDE. Residues 987–1007 are a coiled coil; sequence KDWSDLEEEAANADKRREVEE. Residues 998 to 1014 are compositionally biased toward basic and acidic residues; sequence NADKRREVEEPSRDRDR. The span at 1015-1030 shows a compositional bias: basic residues; it reads KRPHSSKSGPSHKRRK.

The protein belongs to the peptidase M24 family. SPT16 subfamily. Component of the FACT complex, a stable heterodimer of spt-16 and hmg-3 or hmg-4. As to expression, expressed in the germline and somatic cells.

It is found in the nucleus. The protein localises to the chromosome. Functionally, component of the FACT complex, a general chromatin factor that acts to reorganize nucleosomes. The FACT complex is involved in multiple processes that require DNA as a template such as mRNA elongation, DNA replication and DNA repair. During transcription elongation the FACT complex acts as a histone chaperone that both destabilizes and restores nucleosomal structure. It facilitates the passage of RNA polymerase II and transcription by promoting the dissociation of one histone H2A-H2B dimer from the nucleosome, then subsequently promotes the reestablishment of the nucleosome following the passage of RNA polymerase II. In embryos, promotes cell cycle progression and chromosomal segregation. Plays a role in the development of the anterior pharynx during embryonic development. This is FACT complex subunit spt-16 from Caenorhabditis elegans.